Here is a 1133-residue protein sequence, read N- to C-terminus: Envelopment polyprotein (1133 aa).

Positions 1–17 (MWSLLLLAALVGQGFAL) are cleaved as a signal peptide. The Lumenal segment spans residues 18–484 (KNVFDMRIQC…PGFHGWATAA (467 aa)). 11 disulfide bridges follow: Cys27-Cys149, Cys61-Cys155, Cys107-Cys126, Cys131-Cys136, Cys173-Cys183, Cys208-Cys245, Cys232-Cys349, Cys374-Cys433, Cys378-Cys387, Cys403-Cys422, and Cys450-Cys473. Residue Asn132 is glycosylated (N-linked (GlcNAc...) asparagine; by host). N-linked (GlcNAc...) asparagine; by host glycosylation is found at Asn233 and Asn345. A glycan (N-linked (GlcNAc...) asparagine; by host) is linked at Asn397. Residues 485-504 (LLITFCFGWVLIPACTLAIL) traverse the membrane as a helical segment. The Cytoplasmic segment spans residues 505-626 (LVLKFFANIL…NLFRYKSRCY (122 aa)). The tract at residues 514–531 (LHTSNQENRFKAILRKIK) is binding to the ribonucleoprotein. 2 consecutive CCHC-type zinc fingers follow at residues 543 to 563 (CEICKYECETLKELKAHNLSC) and 568 to 589 (CPYCFTHCEPTETAIQAHYKVC). Binding to the ribonucleoprotein regions lie at residues 586–603 (YKVCQATHRFREDLKKTV), 590–601 (QATHRFREDLKK), and 609–623 (GPGCYRTLNLFRYKS). The 24-residue stretch at 609 to 632 (GPGCYRTLNLFRYKSRCYILTMWT) folds into the ITAM domain. The YxxL signature appears at 613–616 (YRTL). A helical membrane pass occupies residues 627 to 647 (ILTMWTLLLIIESILWAASAA). The Lumenal segment spans residues 648-1104 (EIPLVPLWTD…WVMGIINGNW (457 aa)). Cystine bridges form between Cys733/Cys768, Cys737/Cys775, Cys749/Cys883, Cys763/Cys894, Cys778/Cys902, Cys804/Cys813, Cys821/Cys830, and Cys861/Cys865. The interval 755–775 (YEYENSWACNPPDCPGVGTGC) is fusion loop. Residue Asn926 is glycosylated (N-linked (GlcNAc...) asparagine; by host). Intrachain disulfides connect Cys968-Cys998, Cys991-Cys1043, Cys1008-Cys1013, Cys1044-Cys1049, and Cys1083-Cys1087. Residues 1105–1125 (VVLIVLCVLLLFSLILLSILC) traverse the membrane as a helical segment. Positions 1120–1133 (LLSILCPVRKHKKS) are binding to the ribonucleoprotein. Residues 1126–1133 (PVRKHKKS) are Cytoplasmic-facing.

This sequence belongs to the hantavirus envelope glycoprotein family. Homodimer. Homotetramer; forms heterotetrameric Gn-Gc spikes in the pre-fusion conformation. Interacts (via C-terminus) with the nucleoprotein. Interacts with host TUFM; this interaction contributes to the virus-induced degradation of mitochondria by autophagy, which leads to degradation of host MAVS and inhibition of type I interferon (IFN) responses. Interacts with host MAP1LC3B; this interaction contributes to the virus-induced degradation of mitochondria by autophagy, which leads to degradation of host MAVS and inhibition of type I interferon (IFN) responses. In terms of assembly, homodimer. Homotetramer; forms heterotetrameric Gn-Gc spikes in the pre-fusion conformation. Homotrimer; forms homotrimer in the post-fusion conformation at acidic pH. Interacts (via C-terminus) with the nucleoprotein. Post-translationally, envelope polyprotein precursor is quickly cleaved in vivo just after synthesis, presumably by host signal peptidase.

Its subcellular location is the virion membrane. The protein localises to the host cell surface. The protein resides in the host Golgi apparatus membrane. It is found in the host endoplasmic reticulum membrane. It localises to the host mitochondrion. In terms of biological role, forms homotetramers with glycoprotein C at the surface of the virion. Attaches the virion to host cell receptors including integrin ITGAV/ITGB3. This attachment induces virion internalization predominantly through clathrin-dependent endocytosis. Mediates the assembly and budding of infectious virus particles through its interaction with the nucleocapsid protein and the viral genome. May dysregulate normal immune and endothelial cell responses through an ITAM motif. Translocates to mitochondria, binds to host TUFM and recruits MAP1LC3B. These interactions induce mitochondrial autophagy and therefore destruction of host MAVS leading to inhibition of type I interferon (IFN) responses. Concomitant breakdown of glycoprotein N is apparently prevented by the nucleoprotein that may inhibit Gn-stimulated autophagosome-lysosome fusion. Interacts with the viral genomic RNA. Functionally, forms homotetramers with glycoprotein N at the surface of the virion. Attaches the virion to host cell receptors including integrin ITGAV/ITGB3. This attachment induces virion internalization predominantly through clathrin-dependent endocytosis. Class II fusion protein that promotes fusion of viral membrane with host endosomal membrane after endocytosis of the virion. This is Envelopment polyprotein (GP) from Homo sapiens (Human).